The primary structure comprises 61 residues: Small ribosomal subunit protein uS14B (61 aa).

Positions 24, 27, 40, and 43 each coordinate Zn(2+).

It belongs to the universal ribosomal protein uS14 family. Zinc-binding uS14 subfamily. As to quaternary structure, part of the 30S ribosomal subunit. Contacts proteins S3 and S10. Zn(2+) is required as a cofactor.

In terms of biological role, binds 16S rRNA, required for the assembly of 30S particles and may also be responsible for determining the conformation of the 16S rRNA at the A site. The protein is Small ribosomal subunit protein uS14B of Nocardia farcinica (strain IFM 10152).